The chain runs to 148 residues: Lysozyme C (148 aa).

An N-terminal signal peptide occupies residues 1–18; it reads MKALIILGLVLLSVTVQG. Residues 19–148 enclose the C-type lysozyme domain; sequence KIFERCELAR…VSQYVKGCGV (130 aa). Cystine bridges form between cysteine 24/cysteine 146, cysteine 48/cysteine 134, cysteine 83/cysteine 99, and cysteine 95/cysteine 113. Catalysis depends on residues glutamate 53 and aspartate 71.

It belongs to the glycosyl hydrolase 22 family. In terms of assembly, monomer.

The protein localises to the secreted. The catalysed reaction is Hydrolysis of (1-&gt;4)-beta-linkages between N-acetylmuramic acid and N-acetyl-D-glucosamine residues in a peptidoglycan and between N-acetyl-D-glucosamine residues in chitodextrins.. Functionally, lysozymes have primarily a bacteriolytic function; those in tissues and body fluids are associated with the monocyte-macrophage system and enhance the activity of immunoagents. The chain is Lysozyme C (LYZ) from Pygathrix nemaeus (Red-shanked douc langur).